Consider the following 235-residue polypeptide: Pyridoxine 5'-phosphate synthase (235 aa).

Asparagine 6 contacts 3-amino-2-oxopropyl phosphate. Residue 8–9 (DH) participates in 1-deoxy-D-xylulose 5-phosphate binding. Arginine 17 is a binding site for 3-amino-2-oxopropyl phosphate. The Proton acceptor role is filled by histidine 42. The 1-deoxy-D-xylulose 5-phosphate site is built by arginine 44 and histidine 49. The active-site Proton acceptor is glutamate 69. Threonine 99 contributes to the 1-deoxy-D-xylulose 5-phosphate binding site. Histidine 188 (proton donor) is an active-site residue. 3-amino-2-oxopropyl phosphate contacts are provided by residues glycine 189 and 210-211 (GH).

The protein belongs to the PNP synthase family. In terms of assembly, homooctamer; tetramer of dimers.

It is found in the cytoplasm. The enzyme catalyses 3-amino-2-oxopropyl phosphate + 1-deoxy-D-xylulose 5-phosphate = pyridoxine 5'-phosphate + phosphate + 2 H2O + H(+). It functions in the pathway cofactor biosynthesis; pyridoxine 5'-phosphate biosynthesis; pyridoxine 5'-phosphate from D-erythrose 4-phosphate: step 5/5. Functionally, catalyzes the complicated ring closure reaction between the two acyclic compounds 1-deoxy-D-xylulose-5-phosphate (DXP) and 3-amino-2-oxopropyl phosphate (1-amino-acetone-3-phosphate or AAP) to form pyridoxine 5'-phosphate (PNP) and inorganic phosphate. The sequence is that of Pyridoxine 5'-phosphate synthase from Wolbachia pipientis subsp. Culex pipiens (strain wPip).